A 114-amino-acid polypeptide reads, in one-letter code: MSQRVCFMEIEMIKGGNVYTFIRLKEEPMTEFEKLVSEQMKTMDKLLDLQSELDRCKQIEAELRHLERDARLRGIQAEIAVKRKHLADIQDMFQKQTEQVIRSYRSSEKPSSFV.

Residues 31–72 (EFEKLVSEQMKTMDKLLDLQSELDRCKQIEAELRHLERDARL) adopt a coiled-coil conformation.

This is an uncharacterized protein from Bacillus subtilis (strain 168).